The primary structure comprises 384 residues: 8-amino-7-oxononanoate synthase (384 aa).

R21 serves as a coordination point for substrate. 108-109 (GF) lines the pyridoxal 5'-phosphate pocket. Residue H133 coordinates substrate. S179, H207, and T233 together coordinate pyridoxal 5'-phosphate. The residue at position 236 (K236) is an N6-(pyridoxal phosphate)lysine. T352 lines the substrate pocket.

Belongs to the class-II pyridoxal-phosphate-dependent aminotransferase family. BioF subfamily. As to quaternary structure, homodimer. Requires pyridoxal 5'-phosphate as cofactor.

It carries out the reaction 6-carboxyhexanoyl-[ACP] + L-alanine + H(+) = (8S)-8-amino-7-oxononanoate + holo-[ACP] + CO2. The protein operates within cofactor biosynthesis; biotin biosynthesis. Its function is as follows. Catalyzes the decarboxylative condensation of pimeloyl-[acyl-carrier protein] and L-alanine to produce 8-amino-7-oxononanoate (AON), [acyl-carrier protein], and carbon dioxide. This is 8-amino-7-oxononanoate synthase from Escherichia coli O17:K52:H18 (strain UMN026 / ExPEC).